We begin with the raw amino-acid sequence, 178 residues long: Fatty-acid and retinol-binding protein 1 (178 aa).

Positions 1–16 are cleaved as a signal peptide; it reads MYHQLILLALIGTIMA. Coiled coils occupy residues 67-89 and 129-154; these read DAALEALKDKSDKLYKNAVELRN and IKQAARDIIAKYQALNEETKEELKVT.

Belongs to the fatty-acid and retinol-binding protein (FARBP) family. In terms of processing, not glycosylated.

Its subcellular location is the secreted. Functionally, binds retinol and different fatty acids. The chain is Fatty-acid and retinol-binding protein 1 from Loa loa (Eye worm).